Reading from the N-terminus, the 270-residue chain is Oxidoreductase NAD-binding domain-containing protein 1 (270 aa).

An FAD-binding FR-type domain is found at 20–123; that stretch reads MELFSARVCD…VGGNFYFDPQ (104 aa). 137 to 142 contributes to the NAD(+) binding site; it reads GVGINP.

This is Oxidoreductase NAD-binding domain-containing protein 1 (oxnad1) from Danio rerio (Zebrafish).